The primary structure comprises 176 residues: Large ribosomal subunit protein bL28m (176 aa).

The N-terminal 8 residues, 1 to 8 (MASKLLRK), are a transit peptide targeting the mitochondrion.

This sequence belongs to the bacterial ribosomal protein bL28 family. Component of the mitochondrial large ribosomal subunit (mt-LSU). Mature yeast 74S mitochondrial ribosomes consist of a small (37S) and a large (54S) subunit. The 37S small subunit contains a 15S ribosomal RNA (15S mt-rRNA) and at least 32 different proteins. The 54S large subunit contains a 21S rRNA (21S mt-rRNA) and at least 45 different proteins.

It localises to the cytoplasm. It is found in the mitochondrion. Functionally, component of the mitochondrial ribosome (mitoribosome), a dedicated translation machinery responsible for the synthesis of mitochondrial genome-encoded proteins, including at least some of the essential transmembrane subunits of the mitochondrial respiratory chain. The mitoribosomes are attached to the mitochondrial inner membrane and translation products are cotranslationally integrated into the membrane. This chain is Large ribosomal subunit protein bL28m (mrpl24), found in Schizosaccharomyces pombe (strain 972 / ATCC 24843) (Fission yeast).